A 464-amino-acid chain; its full sequence is Argininosuccinate lyase (464 aa).

It belongs to the lyase 1 family. Argininosuccinate lyase subfamily.

The protein localises to the cytoplasm. The enzyme catalyses 2-(N(omega)-L-arginino)succinate = fumarate + L-arginine. The protein operates within amino-acid biosynthesis; L-arginine biosynthesis; L-arginine from L-ornithine and carbamoyl phosphate: step 3/3. The polypeptide is Argininosuccinate lyase (Pseudomonas aeruginosa (strain LESB58)).